Reading from the N-terminus, the 238-residue chain is Small ribosomal subunit protein uS3 (238 aa).

Residues 39-107 enclose the KH type-2 domain; the sequence is MREFIHDYAK…ELHLNIVEIR (69 aa). Positions 212–222 are enriched in basic and acidic residues; sequence PQAHDRRHSEA. The disordered stretch occupies residues 212–238; the sequence is PQAHDRRHSEAQEGAAPRPPRRDRERA.

The protein belongs to the universal ribosomal protein uS3 family. As to quaternary structure, part of the 30S ribosomal subunit. Forms a tight complex with proteins S10 and S14.

Its function is as follows. Binds the lower part of the 30S subunit head. Binds mRNA in the 70S ribosome, positioning it for translation. The polypeptide is Small ribosomal subunit protein uS3 (Cereibacter sphaeroides (strain ATCC 17029 / ATH 2.4.9) (Rhodobacter sphaeroides)).